Consider the following 594-residue polypeptide: Potassium-transporting ATPase potassium-binding subunit (594 aa).

12 helical membrane-spanning segments follow: residues 4 to 24 (QFFG…PFLG), 65 to 85 (QYAV…YALQ), 136 to 156 (ALTV…FALI), 179 to 199 (LYVL…QGVI), 287 to 307 (LEML…GEMV), 314 to 334 (VAIL…TQNA), 361 to 381 (FGVA…CGAV), 390 to 410 (AMGG…FGGV), 413 to 433 (GLYG…LMIG), 450 to 470 (MVSI…ALAV), 518 to 538 (LLGL…LALA), and 560 to 580 (LFIV…YVPA).

This sequence belongs to the KdpA family. In terms of assembly, the system is composed of three essential subunits: KdpA, KdpB and KdpC.

It localises to the cell inner membrane. In terms of biological role, part of the high-affinity ATP-driven potassium transport (or Kdp) system, which catalyzes the hydrolysis of ATP coupled with the electrogenic transport of potassium into the cytoplasm. This subunit binds the periplasmic potassium ions and delivers the ions to the membrane domain of KdpB through an intramembrane tunnel. The polypeptide is Potassium-transporting ATPase potassium-binding subunit (Bordetella avium (strain 197N)).